We begin with the raw amino-acid sequence, 388 residues long: S-adenosylmethionine synthase (388 aa).

His16 serves as a coordination point for ATP. Residue Asp18 coordinates Mg(2+). Glu44 contributes to the K(+) binding site. L-methionine is bound by residues Glu57 and Gln100. The interval 100–110 (QSPEIAQGVDR) is flexible loop. ATP-binding positions include 165-167 (DAK), 231-232 (KF), Asp240, 246-247 (RK), Ala263, and Lys267. Position 240 (Asp240) interacts with L-methionine. Lys271 contacts L-methionine.

The protein belongs to the AdoMet synthase family. Homotetramer; dimer of dimers. Requires Mg(2+) as cofactor. It depends on K(+) as a cofactor.

It is found in the cytoplasm. The catalysed reaction is L-methionine + ATP + H2O = S-adenosyl-L-methionine + phosphate + diphosphate. It functions in the pathway amino-acid biosynthesis; S-adenosyl-L-methionine biosynthesis; S-adenosyl-L-methionine from L-methionine: step 1/1. In terms of biological role, catalyzes the formation of S-adenosylmethionine (AdoMet) from methionine and ATP. The overall synthetic reaction is composed of two sequential steps, AdoMet formation and the subsequent tripolyphosphate hydrolysis which occurs prior to release of AdoMet from the enzyme. The chain is S-adenosylmethionine synthase from Psychrobacter arcticus (strain DSM 17307 / VKM B-2377 / 273-4).